Consider the following 381-residue polypeptide: 1-deoxy-D-xylulose 5-phosphate reductoisomerase (381 aa).

The NADPH site is built by Thr11, Gly12, Ser13, Ile14, Lys36, Asn37, and Asn121. Lys122 provides a ligand contact to 1-deoxy-D-xylulose 5-phosphate. Glu123 serves as a coordination point for NADPH. Residue Asp147 coordinates Mn(2+). Residues Ser148, Glu149, Ser173, and His196 each coordinate 1-deoxy-D-xylulose 5-phosphate. Glu149 serves as a coordination point for Mn(2+). Gly202 serves as a coordination point for NADPH. 4 residues coordinate 1-deoxy-D-xylulose 5-phosphate: Ser209, Asn214, Lys215, and Glu218. Glu218 contributes to the Mn(2+) binding site.

It belongs to the DXR family. The cofactor is Mg(2+). Requires Mn(2+) as cofactor.

It catalyses the reaction 2-C-methyl-D-erythritol 4-phosphate + NADP(+) = 1-deoxy-D-xylulose 5-phosphate + NADPH + H(+). It participates in isoprenoid biosynthesis; isopentenyl diphosphate biosynthesis via DXP pathway; isopentenyl diphosphate from 1-deoxy-D-xylulose 5-phosphate: step 1/6. Its function is as follows. Catalyzes the NADPH-dependent rearrangement and reduction of 1-deoxy-D-xylulose-5-phosphate (DXP) to 2-C-methyl-D-erythritol 4-phosphate (MEP). This is 1-deoxy-D-xylulose 5-phosphate reductoisomerase from Acetivibrio thermocellus (strain ATCC 27405 / DSM 1237 / JCM 9322 / NBRC 103400 / NCIMB 10682 / NRRL B-4536 / VPI 7372) (Clostridium thermocellum).